The following is a 173-amino-acid chain: Crossover junction endodeoxyribonuclease RuvC (173 aa).

Residues aspartate 8, glutamate 67, and aspartate 139 contribute to the active site. 3 residues coordinate Mg(2+): aspartate 8, glutamate 67, and aspartate 139.

This sequence belongs to the RuvC family. Homodimer which binds Holliday junction (HJ) DNA. The HJ becomes 2-fold symmetrical on binding to RuvC with unstacked arms; it has a different conformation from HJ DNA in complex with RuvA. In the full resolvosome a probable DNA-RuvA(4)-RuvB(12)-RuvC(2) complex forms which resolves the HJ. Mg(2+) is required as a cofactor.

The protein localises to the cytoplasm. The catalysed reaction is Endonucleolytic cleavage at a junction such as a reciprocal single-stranded crossover between two homologous DNA duplexes (Holliday junction).. In terms of biological role, the RuvA-RuvB-RuvC complex processes Holliday junction (HJ) DNA during genetic recombination and DNA repair. Endonuclease that resolves HJ intermediates. Cleaves cruciform DNA by making single-stranded nicks across the HJ at symmetrical positions within the homologous arms, yielding a 5'-phosphate and a 3'-hydroxyl group; requires a central core of homology in the junction. The consensus cleavage sequence is 5'-(A/T)TT(C/G)-3'. Cleavage occurs on the 3'-side of the TT dinucleotide at the point of strand exchange. HJ branch migration catalyzed by RuvA-RuvB allows RuvC to scan DNA until it finds its consensus sequence, where it cleaves and resolves the cruciform DNA. This is Crossover junction endodeoxyribonuclease RuvC from Shewanella oneidensis (strain ATCC 700550 / JCM 31522 / CIP 106686 / LMG 19005 / NCIMB 14063 / MR-1).